Consider the following 292-residue polypeptide: ATP synthase gamma chain (292 aa).

The protein belongs to the ATPase gamma chain family. F-type ATPases have 2 components, CF(1) - the catalytic core - and CF(0) - the membrane proton channel. CF(1) has five subunits: alpha(3), beta(3), gamma(1), delta(1), epsilon(1). CF(0) has three main subunits: a, b and c.

It is found in the cell membrane. Produces ATP from ADP in the presence of a proton gradient across the membrane. The gamma chain is believed to be important in regulating ATPase activity and the flow of protons through the CF(0) complex. The protein is ATP synthase gamma chain of Streptococcus mutans serotype c (strain ATCC 700610 / UA159).